Here is a 316-residue protein sequence, read N- to C-terminus: Aquaglyceroporin-2 (316 aa).

The disordered stretch occupies residues methionine 1 to glycine 31. At methionine 1–glutamate 59 the chain is on the cytoplasmic side. The span at serine 11–glycine 24 shows a compositional bias: polar residues. The chain crosses the membrane as a helical span at residues phenylalanine 60 to serine 80. The Extracellular portion of the chain corresponds to lysine 81 to asparagine 86. Residues tryptophan 87 to histidine 107 form a helical membrane-spanning segment. The Cytoplasmic segment spans residues tyrosine 108–lysine 131. Residues asparagine 114 to alanine 116 carry the NPA 1 motif. A helical membrane pass occupies residues valine 132 to leucine 152. At asparagine 153–serine 187 the chain is on the extracellular side. A glycan (N-linked (GlcNAc...) asparagine) is linked at asparagine 172. Residues isoleucine 188–alanine 208 traverse the membrane as a helical segment. Over methionine 209 to arginine 219 the chain is Cytoplasmic. The helical transmembrane segment at isoleucine 220 to glutamate 240 threads the bilayer. Residues threonine 241 to lysine 271 lie on the Extracellular side of the membrane. The NPA 2 signature appears at asparagine 246–alanine 248. Residues phenylalanine 272–tyrosine 292 traverse the membrane as a helical segment. Over aspartate 293 to alanine 316 the chain is Cytoplasmic.

This sequence belongs to the MIP/aquaporin (TC 1.A.8) family.

It is found in the cell membrane. It localises to the membrane. It catalyses the reaction H2O(in) = H2O(out). The enzyme catalyses glycerol(in) = glycerol(out). Polyethylene glycol (PEG) stimulates whereas glycerol inhibits the aquaporin activity. Its function is as follows. Water channel required to facilitate the transport of water across membranes. Stimulates plant drought tolerance by facilitating the transport of water from the arbuscular mycorrhiza fungus to host plants. The chain is Aquaglyceroporin-2 from Rhizophagus irregularis (Arbuscular mycorrhizal fungus).